We begin with the raw amino-acid sequence, 127 residues long: Ribonuclease P protein component (127 aa).

This sequence belongs to the RnpA family. In terms of assembly, consists of a catalytic RNA component (M1 or rnpB) and a protein subunit.

It carries out the reaction Endonucleolytic cleavage of RNA, removing 5'-extranucleotides from tRNA precursor.. In terms of biological role, RNaseP catalyzes the removal of the 5'-leader sequence from pre-tRNA to produce the mature 5'-terminus. It can also cleave other RNA substrates such as 4.5S RNA. The protein component plays an auxiliary but essential role in vivo by binding to the 5'-leader sequence and broadening the substrate specificity of the ribozyme. This Agrobacterium fabrum (strain C58 / ATCC 33970) (Agrobacterium tumefaciens (strain C58)) protein is Ribonuclease P protein component.